The sequence spans 865 residues: Leucine--tRNA ligase (865 aa).

Positions 58-68 (PYPSGNLHMGH) match the 'HIGH' region motif. The 'KMSKS' region motif lies at 629 to 633 (KMSKS). Lys632 is a binding site for ATP.

This sequence belongs to the class-I aminoacyl-tRNA synthetase family.

Its subcellular location is the cytoplasm. It carries out the reaction tRNA(Leu) + L-leucine + ATP = L-leucyl-tRNA(Leu) + AMP + diphosphate. This Synechococcus elongatus (strain ATCC 33912 / PCC 7942 / FACHB-805) (Anacystis nidulans R2) protein is Leucine--tRNA ligase.